The following is an 80-amino-acid chain: Bowman-Birk type proteinase inhibitor (80 aa).

Disulfide bonds link Cys19–Cys70, Cys20–Cys35, Cys23–Cys66, Cys25–Cys33, Cys41–Cys47, Cys44–Cys59, and Cys49–Cys57.

As to quaternary structure, occurs as a monomer, dimer or trimer. The dimer may be the active form. In terms of processing, binds calcium, probably through His-3 to His-6.

Functionally, protease inhibitor with activity against cysteine, aspartic and serine proteases. Highest activity against serine proteases, in particular trypsin and trypsin-like proteases. This is Bowman-Birk type proteinase inhibitor from Phaseolus acutifolius (Tepary bean).